The chain runs to 465 residues: MLWTDCLTRLRQELSDNVFAMWIRPLVAEETTDSLRLYAPNPYWTRYIQEHHLELISILVEQLSEGRIRQVEILVDSRPGAILSPAEQPATTTAALSSTPVVPQRVKKEVVEPAATQSNKILNSKKRLLNPLFTFSLFVEGRSNQMAAETCRKVLTQLGASQHNPLFLYGPTGLGKTHLMQAVGNALLQAKPNARVMYMTAESFVQDFVSSLQKGKVEEFKKNCRSLDLLLVDDIHLLAGKEASLVEFFYTFNALLDESKQIILTSDRYPKELTELDPRLVSRFSWGLSVGVEPPDIETRIEILLKKAENSGVDLPRNCALFIAQQVVANVRELEGALNKVVAIARFKGSQIDLDVVRESLKDVLAIRARTISVENIQRVVSEYFRIPLKELIGPKRTRIYARPRQLAMGLARELTGDSFPEIGMAFGGRDHSTVMHACEKVQSLKQEDPIFNEDYKNLLRLLQS.

A domain I, interacts with DnaA modulators region spans residues 1–80 (MLWTDCLTRL…VEILVDSRPG (80 aa)). A domain II region spans residues 80–127 (GAILSPAEQPATTTAALSSTPVVPQRVKKEVVEPAATQSNKILNSKKR). The domain III, AAA+ region stretch occupies residues 128–345 (LLNPLFTFSL…GALNKVVAIA (218 aa)). Residues glycine 173, glycine 175, lysine 176, and threonine 177 each contribute to the ATP site. Positions 346–465 (RFKGSQIDLD…YKNLLRLLQS (120 aa)) are domain IV, binds dsDNA.

This sequence belongs to the DnaA family. As to quaternary structure, oligomerizes as a right-handed, spiral filament on DNA at oriC.

The protein localises to the cytoplasm. Functionally, plays an essential role in the initiation and regulation of chromosomal replication. ATP-DnaA binds to the origin of replication (oriC) to initiate formation of the DNA replication initiation complex once per cell cycle. Binds the DnaA box (a 9 base pair repeat at the origin) and separates the double-stranded (ds)DNA. Forms a right-handed helical filament on oriC DNA; dsDNA binds to the exterior of the filament while single-stranded (ss)DNA is stabiized in the filament's interior. The ATP-DnaA-oriC complex binds and stabilizes one strand of the AT-rich DNA unwinding element (DUE), permitting loading of DNA polymerase. After initiation quickly degrades to an ADP-DnaA complex that is not apt for DNA replication. Binds acidic phospholipids. The chain is Chromosomal replication initiator protein DnaA from Acinetobacter baylyi (strain ATCC 33305 / BD413 / ADP1).